A 210-amino-acid chain; its full sequence is MVALTRRQREMYDFLCSFTDSHGYSPSFEEIAEGMGLSSLATVHKHIGNLESKGLLKRDYNRARSIEVLRPKGQLKKSMAAAAAVATAGLPFLGRIAAGQPIEAIENPETISLGDFTGSKEVFVLQVSGESMQDEHIVDGDYVLVERINTARDGEIVVALVENSDTTLKRIYREGETVRLQPSNAKMQPIRVPAGSVQVQGRVIGVLRKY.

The H-T-H motif DNA-binding region spans 28-48 (FEEIAEGMGLSSLATVHKHIG). Catalysis depends on for autocatalytic cleavage activity residues Ser131 and Lys169.

Belongs to the peptidase S24 family. As to quaternary structure, homodimer.

The catalysed reaction is Hydrolysis of Ala-|-Gly bond in repressor LexA.. In terms of biological role, represses a number of genes involved in the response to DNA damage (SOS response), including recA and lexA. In the presence of single-stranded DNA, RecA interacts with LexA causing an autocatalytic cleavage which disrupts the DNA-binding part of LexA, leading to derepression of the SOS regulon and eventually DNA repair. The polypeptide is LexA repressor (Koribacter versatilis (strain Ellin345)).